The primary structure comprises 618 residues: MPIQVLPPQLANQIAAGEVVERPASVVKELVENSLDAGATRVDIDIERGGAKLIRIRDNGCGIKKEELALALARHATSKIASLDDLEAIISLGFRGEALASISSVSRLTLTSRTAEQAEAWQAYAEGRDMDVTVKPAAHPVGTTLEVLDLFYNTPARRKFMRTEKTEFNHIDEIIRRIALARFDVTLNLSHNGKLVRQYRAVAKDGQKERRLGAICGTPFLEQALAIEWQHGDLTLRGWVADPNHTTTALTEIQYCYVNGRMMRDRLINHAIRQACEDKLGADQQPAFVLYLEIDPHQVDVNVHPAKHEVRFHQSRLVHDFIYQGVLSVLQQQTETTLPLEEIAPAPRHVPENRIAAGRNHFAVPAEPTAAREPATPRYSGGASGGNGGRQTAGGWPHAQPGYQKQQGEVYRALLQTPTTSPVPEPVAPALDGHSQSFGRVLTIVGGDCALLEHAGTIQLLSLPVAERWLRQAQLTPGQSPVCAQPLLIPLRLKVSADEKAALQQAQSLLGELGIEFQSDAQHVTIRAVPLPLRQQNLQILIPELIGYLAQQTTFATVNIAQWIARNVQSEHPQWSMAQAISLLADVERLCPQLVKAPPGGLLQPVDLHSAMNALKHE.

Residues 367-378 (EPTAAREPATPR) are compositionally biased toward low complexity. The disordered stretch occupies residues 367–402 (EPTAAREPATPRYSGGASGGNGGRQTAGGWPHAQPG). Positions 382–392 (GASGGNGGRQT) are enriched in gly residues.

The protein belongs to the DNA mismatch repair MutL/HexB family.

In terms of biological role, this protein is involved in the repair of mismatches in DNA. It is required for dam-dependent methyl-directed DNA mismatch repair. May act as a 'molecular matchmaker', a protein that promotes the formation of a stable complex between two or more DNA-binding proteins in an ATP-dependent manner without itself being part of a final effector complex. In Salmonella choleraesuis (strain SC-B67), this protein is DNA mismatch repair protein MutL.